The primary structure comprises 519 residues: Putative cysteine ligase BshC (519 aa).

2 coiled-coil regions span residues 51–71 (LNALVDELMRQNPRLNDSLKE) and 440–464 (TKLNKQLQLAVETIVDQKRRLHEQA).

The protein belongs to the BshC family.

In terms of biological role, involved in bacillithiol (BSH) biosynthesis. May catalyze the last step of the pathway, the addition of cysteine to glucosamine malate (GlcN-Mal) to generate BSH. The chain is Putative cysteine ligase BshC from Exiguobacterium sibiricum (strain DSM 17290 / CCUG 55495 / CIP 109462 / JCM 13490 / 255-15).